A 288-amino-acid polypeptide reads, in one-letter code: MSLSNWPLKKENSEAYNIKNSKQITIPDGLWIKCFDCGLLMYSKVLKRNLKVCPQCSYHFQASSNERIDQLIDQGSWQPMDVHLISTDPLGFKDQKLYSQRLKDTAFKTGLQDAVQTGTGTMQGKKVCLGIMDFRFMGGSMGSVVGEKLTRLLEKATQEKLPAIILCASGGARMQEGMLSLMQMAKISSALEMHKKENLLYISVLTSPTTGGVTASFAMLGDLIIAEPKALIAFAGRRVIEQTIKEDLPDNFQSSEYLFEHGFLDLIVSRTQLRSKLIQILSLHNHSK.

One can recognise a CoA carboxyltransferase N-terminal domain in the interval 30 to 288; it reads LWIKCFDCGL…QILSLHNHSK (259 aa). Positions 34, 37, 53, and 56 each coordinate Zn(2+). A C4-type zinc finger spans residues 34–56; the sequence is CFDCGLLMYSKVLKRNLKVCPQC.

It belongs to the AccD/PCCB family. In terms of assembly, acetyl-CoA carboxylase is a heterohexamer composed of biotin carboxyl carrier protein, biotin carboxylase and 2 subunits each of ACCase subunit alpha and ACCase plastid-coded subunit beta (accD). It depends on Zn(2+) as a cofactor.

It is found in the plastid. Its subcellular location is the chloroplast stroma. The catalysed reaction is N(6)-carboxybiotinyl-L-lysyl-[protein] + acetyl-CoA = N(6)-biotinyl-L-lysyl-[protein] + malonyl-CoA. It functions in the pathway lipid metabolism; malonyl-CoA biosynthesis; malonyl-CoA from acetyl-CoA: step 1/1. Its function is as follows. Component of the acetyl coenzyme A carboxylase (ACC) complex. Biotin carboxylase (BC) catalyzes the carboxylation of biotin on its carrier protein (BCCP) and then the CO(2) group is transferred by the transcarboxylase to acetyl-CoA to form malonyl-CoA. The chain is Acetyl-coenzyme A carboxylase carboxyl transferase subunit beta, chloroplastic from Pyropia yezoensis (Susabi-nori).